The primary structure comprises 292 residues: Putative gonadotropin-releasing hormone II receptor (292 aa).

The Extracellular segment spans residues 1-28 (MSAGNGTPWDATWNITVQWLAVDIACRT). Cysteine 26 and cysteine 101 are oxidised to a cystine. A helical transmembrane segment spans residues 29–49 (LMFLKLMATYSAAFLPVVIGL). Topologically, residues 50-67 (DRQAAVLNPLGSRSGVRK) are cytoplasmic. Residues 68–88 (LLGAAWGLSFLLAFPQLFLFH) traverse the membrane as a helical segment. Residues 89 to 115 (TVHCAGPVPFTQCVTKGSFKAQWQETT) lie on the Extracellular side of the membrane. Residues 116-136 (YNLFTFCCLFLLPLTAMAICY) form a helical membrane-spanning segment. Over 137–177 (SRIVLSVSRPQTRKGSHAPAGEFALPRSFDNCPRVRLRALR) the chain is Cytoplasmic. Residues 178–198 (LALLILLTFILCWTPYYLLGM) form a helical membrane-spanning segment. Residues 199-216 (WYWFSPTMLTEVPPSLSH) lie on the Extracellular side of the membrane. The helical transmembrane segment at 217–237 (ILFLLGLLNAPLDPLLYGAFT) threads the bilayer. The Cytoplasmic portion of the chain corresponds to 238–292 (LGCRRGHQELSIDSSKEGSGRMLQEEIHAFRQLEVQKTVTSRRAGETKGISITSI).

The protein belongs to the G-protein coupled receptor 1 family. Post-translationally, phosphorylated on the C-terminal cytoplasmic tail. Expressed in many tissues.

Its subcellular location is the cell membrane. Its function is as follows. Putative receptor for gonadotropin releasing hormone II (GnRH II) which is most probably non-functional. The protein is Putative gonadotropin-releasing hormone II receptor (GNRHR2) of Homo sapiens (Human).